Consider the following 172-residue polypeptide: Signal peptidase complex catalytic subunit sec11 (172 aa).

At 1–14 (MLSFLQNPRQAAAQ) the chain is on the cytoplasmic side. The helical; Signal-anchor for type II membrane protein transmembrane segment at 15-35 (VLNFALILSTAFMMWKGLSVA) threads the bilayer. The Lumenal segment spans residues 36 to 172 (SDSPSPIVVV…MGLVVVLQRE (137 aa)). Catalysis depends on charge relay system residues serine 49, histidine 90, and aspartate 115. A C-terminal short (CTS) helix region spans residues 158–169 (VMLGMMGLVVVL).

It belongs to the peptidase S26B family. Component of the signal peptidase complex (SPC) composed of a catalytic subunit SEC11 and three accessory subunits SPC1, SPC2 and SPC3. The complex induces a local thinning of the ER membrane which is used to measure the length of the signal peptide (SP) h-region of protein substrates. This ensures the selectivity of the complex towards h-regions shorter than 18-20 amino acids. SPC associates with the translocon complex.

The protein resides in the endoplasmic reticulum membrane. The enzyme catalyses Cleavage of hydrophobic, N-terminal signal or leader sequences from secreted and periplasmic proteins.. Catalytic component of the signal peptidase complex (SPC) which catalyzes the cleavage of N-terminal signal sequences from nascent proteins as they are translocated into the lumen of the endoplasmic reticulum. Specifically cleaves N-terminal signal peptides that contain a hydrophobic alpha-helix (h-region) shorter than 18-20 amino acids. The protein is Signal peptidase complex catalytic subunit sec11 (sec11) of Sclerotinia sclerotiorum (strain ATCC 18683 / 1980 / Ss-1) (White mold).